The sequence spans 310 residues: UPF0761 membrane protein VFMJ11_0098 (310 aa).

6 consecutive transmembrane segments (helical) span residues 34 to 54 (YMAY…LSVL), 97 to 117 (MTAV…SSID), 136 to 156 (FSLY…SLAA), 178 to 198 (LLGW…YLLV), 207 to 227 (HALI…VGFA), and 242 to 262 (ALAA…IVLI).

Belongs to the UPF0761 family.

The protein localises to the cell inner membrane. The sequence is that of UPF0761 membrane protein VFMJ11_0098 from Aliivibrio fischeri (strain MJ11) (Vibrio fischeri).